We begin with the raw amino-acid sequence, 231 residues long: Large ribosomal subunit protein uL1 (231 aa).

The protein belongs to the universal ribosomal protein uL1 family. In terms of assembly, part of the 50S ribosomal subunit.

Its function is as follows. Binds directly to 23S rRNA. The L1 stalk is quite mobile in the ribosome, and is involved in E site tRNA release. Functionally, protein L1 is also a translational repressor protein, it controls the translation of the L11 operon by binding to its mRNA. The chain is Large ribosomal subunit protein uL1 from Francisella tularensis subsp. tularensis (strain WY96-3418).